Reading from the N-terminus, the 316-residue chain is tRNA-splicing endonuclease subunit Sen34 (316 aa).

A disordered region spans residues 120–184; the sequence is QAAKKQKLEQ…PGPSNGVTPL (65 aa). Composition is skewed to polar residues over residues 144–159 and 168–181; these read EATQ…QPSA and LDSS…SNGV. Residues Tyr-253, His-261, and Lys-292 contribute to the active site.

This sequence belongs to the tRNA-intron endonuclease family. TRNA splicing endonuclease is a heterotetramer composed of TSEN2, TSEN15, TSEN34/LENG5 and TSEN54. tRNA splicing endonuclease complex also contains proteins of the pre-mRNA 3'-end processing machinery such as CLP1, CPSF1, CPSF4 and CSTF2.

It localises to the nucleus. The protein resides in the nucleolus. It catalyses the reaction pretRNA = a 3'-half-tRNA molecule with a 5'-OH end + a 5'-half-tRNA molecule with a 2',3'-cyclic phosphate end + an intron with a 2',3'-cyclic phosphate and a 5'-hydroxyl terminus.. In terms of biological role, constitutes one of the two catalytic subunit of the tRNA-splicing endonuclease complex, a complex responsible for identification and cleavage of the splice sites in pre-tRNA. It cleaves pre-tRNA at the 5'- and 3'-splice sites to release the intron. The products are an intron and two tRNA half-molecules bearing 2',3'-cyclic phosphate and 5'-OH termini. There are no conserved sequences at the splice sites, but the intron is invariably located at the same site in the gene, placing the splice sites an invariant distance from the constant structural features of the tRNA body. The tRNA splicing endonuclease is also involved in mRNA processing via its association with pre-mRNA 3'-end processing factors, establishing a link between pre-tRNA splicing and pre-mRNA 3'-end formation, suggesting that the endonuclease subunits function in multiple RNA-processing events. The protein is tRNA-splicing endonuclease subunit Sen34 (Tsen34) of Mus musculus (Mouse).